A 422-amino-acid chain; its full sequence is Zinc finger protein Gfi-1 (422 aa).

An SNAG domain region spans residues 1–20 (MPRSFLVKSKKAHSYHQPRS). The disordered stretch occupies residues 1–107 (MPRSFLVKSK…SPASEKSVCP (107 aa)). Serine 20 bears the Phosphoserine mark. A compositionally biased stretch (low complexity) spans 34–47 (APGGADGTSSAGGA). Serine 56 carries the phosphoserine modification. The segment covering 57-72 (PESQLTEAPDRSSASP) has biased composition (polar residues). Residues 140 to 257 (RPCAALDRGA…LLLGGGSYKC (118 aa)) are required for interaction with RELA. C2H2-type zinc fingers lie at residues 255–278 (YKCIKCSKVFSTPHGLEVHVRRSH), 284–306 (FACEMCGKTFGHAVSLEQHKAVH), 312–334 (FDCKICGKSFKRSSTLSTHLLIH), 340–362 (YPCQYCGKRFHQKSDMKKHTFIH), 368–390 (HKCQVCGKAFSQSSNLITHSRKH), and 396–419 (FGCDLCGKGFQRKVDLRRHRETQH).

In terms of assembly, interacts with U2AF1L4. Component of RCOR-GFI-KDM1A-HDAC complexes. Interacts directly with RCOR1, KDM1A and HDAC2. Also interacts with HDAC1 and HDAC3. Interacts (via the zinc-finger domain) with ARIH2; the interaction prevents GFI1 ubiquitination and proteasomal degradation. Interacts with PIAS3; the interaction relieves the inhibitory effect of PIAS3 on STAT3-mediated transcriptional activity. Forms a complex with EHMT2 and HDAC1 to promote 'Lys-9' dimethylation of H3 (H3K9Me2) and repress expression of target genes. Interacts directly with EHMT2. Component of the GFI1-AJUBA-HDAC1 repressor complex. Interacts directly with AJUBA (via ITS LIM domains); the interaction results in the HDAC-dependent corepression of a subset of GFI1 target genes and, occurs independently of the SNAG domain. Interacts with SPI1; the interaction inhibits SPI1 transcriptional activity targeted at macrophage-specific genes, repressing macrophage differentiation of myeloid progenitor cells and promoting granulocyte commitment. Interacts with RUNX1T1; the interaction represses HDAC-mediated transcriptional activity. Interacts with RELA; the interaction occurs on liposaccharide (LPS) stimulation and controls RELA DNA binding activity and regulates endotoxin-mediated TOLL-like receptor inflammatory response. Interacts (via the C-terminal zinc fingers) with ZBTB17; the interaction results in the recruitment of GFI1 to the CDKN1A/p21 and CDKNIB promoters and repression of transcription. In terms of processing, ubiquitinated.

The protein localises to the nucleus. Its function is as follows. Transcription repressor essential for hematopoiesis. Functions in a cell-context and development-specific manner. Binds to 5'-TAAATCAC[AT]GCA-3' in the promoter region of a large number of genes. Component of several complexes, including the EHMT2-GFI1-HDAC1, AJUBA-GFI1-HDAC1 and RCOR-GFI-KDM1A-HDAC complexes, that suppress, via histone deacetylase (HDAC) recruitment, a number of genes implicated in multilineage blood cell development. Regulates neutrophil differentiation, promotes proliferation of lymphoid cells, and is required for granulocyte development. Inhibits SPI1 transcriptional activity at macrophage-specific genes, repressing macrophage differentiation of myeloid progenitor cells and promoting granulocyte commitment. Mediates, together with U2AF1L4, the alternative splicing of CD45 and controls T-cell receptor signaling. Regulates the endotoxin-mediated Toll-like receptor (TLR) inflammatory response by antagonizing RELA. Cooperates with CBFA2T2 to regulate ITGB1-dependent neurite growth. Controls cell-cycle progression by repressing CDKNIA/p21 transcription in response to TGFB1 via recruitment of GFI1 by ZBTB17 to the CDKNIA/p21 and CDKNIB promoters. Required for the maintenance of inner ear hair cells. In addition to its role in transcription, acts as a substrate adapter for PRMT1 in the DNA damage response: facilitates the recognition of TP53BP1 and MRE11 substrates by PRMT1, promoting their methylation and the DNA damage response. This chain is Zinc finger protein Gfi-1 (GFI1), found in Canis lupus familiaris (Dog).